The sequence spans 2221 residues: MAYFLPSFFQKRLLRYALSRLGLVDTEALDLDSLGIRWGQRSTVELRDIGLRLDKLATLLHLPASSELVSARIRFLKITVPADIYSSGIICQASGIDVHLRLLSDETRHAGQGDRPMGSGPGHDSASDPIIPNPTDLAQSFLQAEPKEEREELKAAISSQSQVLHRTSTSGSDDEEELGYGNEGVSLPSFVAAFLKGVADRLQVQVDDISIRVDMETKQDAPLKRQPEDKPDLVTGLLTVGQVKVDAVSSSSNENEASSRNQRRLISLSDINVALVSEPAVFSNYSRFTAPTSPESTSPESPLQPKPSPPPSHVSSPPSEHASEEDTALDLTRSIMFEPSRGMSESKIIEQYAPEMEGSVCTYDGRFSDADTEEETRSHGNMGESQNLLVDDEILDNPAYLDSVIDSHLHDDELDGIGHFPPEVGQRALGNEDTPRLRTPELHAAGSASHYSDTQNAMILAPRSQVPAVTSLAQDKLQIPEAVDIATRPALPAIELEVTQDPQPCADNQTSPVTSVPPSEASSSSSTSGSFNQDELSESRLFSNEEAQSMYMSAVSHDSMSRSFMPNIPGAWDSPESTVVRDSHAHMHHENGRDVQHMDPDHEDDDEAVATPKLTAQAGMHISQECLIDDSPEAHRDPTDKELSRSSSGLNKFTDVARRFFSIDKVVISIPSMDEDGDSADNTPSASYTEEDTRGLEETTACLRDSATEDYFAPPGRKASTRTRSDTIRPASYGYEGAEKGSSQPSQSDGQAQSRRSPNDMEIEVFSAELQFDIAIGWLVLKVGHKILHAFSNDSEVSQQTGQPQEEVQKRQAIKLALRKFSIKFVEHVPGHSYPAETDSSPFFGLLHNDILLQTCLSGLEAHLSIDKDITKLHLNIKKFSLGFASEHLISFSEDFKMRDSVRDVLSAEQGDIDLSITKSPDSTTVNLMTLPLQLNLNIQRLEEAIGWFGGLSTILELGNSISSASSGKGPKKEAPKRPRGVHFEEFPPPAASERTGSAPLKVNVRIGGLAADVVGETHYVKLRTTAAKIISRSSGVAVQIDKAKLTGPLPLDETRDAPAKLSLTDIRIEYRFSPKEEDLDRLLGLITPSKDKYDEDDDIMLDTLFRQRRQGSVLCLTISGARVAVSRTTDLDSISQLADELSRLSNVTKYLPEDDRPGVLTLALVRELEVQVHIGGKVGEMSAILRNTELAFISLPSLIAAQLGSITVARNRDEELVGEASAIGHKSSLSQSPLPVLMARYIADEMDPTVKVKLHNFRAEYTLPSIIAFLGLSDDMTTGDVAANMASSLANLAELQPPHHDVQLPEKGGRSDTPSKPIKLTVDLRDCVLGLNPRGTGAKGLVVLTTAKFSGAIHDPVSSDATLELRKASLMIIDDVANVGYADNVQRRSSAPPHSNQVQSFIDHGFVTVCTISSATATVKIMRLSDDGAKSLDVELRDDLLILETCADSTQTLISIVNGLQPPTPPSAAAKYRTEVLPIQDMLSSFTGDAFFTDMPEPPETTDSPDQNQGAGHLEDERDYVSDFKHVSAVPEHGSLTEGMMASGSNELLDSFHSQYYVSSSISELDFREDHFAQKSAVGGTAHRWDSTQNTYGLSDDSKLQKSPLRIRVRDAHVIWNLFDGYDWQRTRDTISKAVKDVERKAIERRARAGSRASPSFDEEEESVIGDCLFNSIYIGVPANKDPRDIRNDINRNIDDLASETGSYATTTTVTGATVRQSQSPSVRGKKLRLSRSKYHKMTFELKGICADLVVFPPDSGETQSSLDVRIKDLEVFDHVPTSTWKKFATYMHEAGEKESGTSMVHLEILTVRPVPQLAATEIVLKATILPLRLHVDQDALDFICRFFEFRDDSAPTPTAPSDVPFLQRVEINAVPVRLDFKPKRVDYAGLRSGRTTEFMNFFILDAADMTMRHVIIYGVSGFDKLGQTLNDIWMPDIKRNQLPGVLAGLAPIRSLVNVGGGVKDLVAVPVREYRKDGRLVRSIQKGALSFAKTTSNELVKLGAKLAIGTQTVLQGAEDLLTTPNASGAGVEDEYADDEEAKKISLYADQPVGVVQGLRGAFRGLERDLLLTRDAIVAVPGEVIESGSAKAAAKAVWKRAPTVVLRPAIGVSKAVGQTLLGAGNTLDPSNRRKMEDVSYTFPQRADSILTLLAEIQAPLTTFVAITLAVLSASSSSWDGYGAIDWDIYRSRSHIHLRAGRYRSTQDDNKMDACSHLKDFIRGGS.

Disordered stretches follow at residues 108 to 135, 148 to 181, 288 to 327, 502 to 537, 575 to 606, 629 to 648, 672 to 758, 963 to 996, 1297 to 1318, and 1495 to 1514; these read RHAG…PNPT, EERE…LGYG, FTAP…EEDT, PQPC…DELS, PEST…EDDD, DDSP…RSSS, SMDE…RRSP, SSAS…SERT, QPPH…PSKP, and DMPE…GAGH. Residues 157-171 are compositionally biased toward polar residues; it reads ISSQSQVLHRTSTSG. The span at 291–301 shows a compositional bias: low complexity; sequence PTSPESTSPES. The span at 302–312 shows a compositional bias: pro residues; it reads PLQPKPSPPPS. Positions 510–530 are enriched in low complexity; sequence TSPVTSVPPSEASSSSSTSGS. 2 stretches are compositionally biased toward basic and acidic residues: residues 579 to 600 and 632 to 644; these read VVRD…HMDP and PEAH…KELS. Over residues 741–756 the composition is skewed to polar residues; that stretch reads GSSQPSQSDGQAQSRR. Composition is skewed to basic and acidic residues over residues 971 to 986 and 1298 to 1311; these read PKKE…HFEE and PPHH…KGGR. A compositionally biased stretch (polar residues) spans 1502 to 1511; that stretch reads TTDSPDQNQG.

Belongs to the ATG2 family.

The protein localises to the preautophagosomal structure membrane. The protein resides in the endoplasmic reticulum membrane. The catalysed reaction is a 1,2-diacyl-sn-glycero-3-phosphocholine(in) = a 1,2-diacyl-sn-glycero-3-phosphocholine(out). It catalyses the reaction a 1,2-diacyl-sn-glycero-3-phospho-L-serine(in) = a 1,2-diacyl-sn-glycero-3-phospho-L-serine(out). It carries out the reaction a 1,2-diacyl-sn-glycero-3-phosphoethanolamine(in) = a 1,2-diacyl-sn-glycero-3-phosphoethanolamine(out). In terms of biological role, lipid transfer protein required for autophagosome completion and peroxisome degradation. Tethers the edge of the isolation membrane (IM) to the endoplasmic reticulum (ER) and mediates direct lipid transfer from ER to IM for IM expansion. Atg2 binds to the ER exit site (ERES), which is the membrane source for autophagosome formation, using basic residues in its N-terminal region (NR) and to the expanding edge of the IM through its C-terminal region. The latter binding is assisted by an atg18-PtdIns3P interaction. Atg2 then extracts phospholipids from the membrane source using its NR and transfers them to atg9 to the IM through its predicted beta-sheet-rich structure for membrane expansion. The sequence is that of Autophagy-related protein 2 (atg2) from Aspergillus niger (strain ATCC MYA-4892 / CBS 513.88 / FGSC A1513).